An 842-amino-acid polypeptide reads, in one-letter code: Cullin-8 (842 aa).

Residues 1 to 50 (MINESVSKREGFHESISRETSASNALGLYNKFNDERNPRYRTMIAELHEF) form a required for interaction with MMS1 region. Positions 755–765 (LQSSNTGGERT) are enriched in polar residues. The segment at 755-775 (LQSSNTGGERTSSAHHEGSNS) is disordered. Lysine 791 participates in a covalent cross-link: Glycyl lysine isopeptide (Lys-Gly) (interchain with G-Cter in NEDD8).

Belongs to the cullin family. Component of multiple cullin-RING ligases (CRLs) composed of 4 subunits: the RING protein HRT1, the cullin RTT101, a linker protein MMS1, and one of many alternative substrate receptors belonging to a protein family described as DCAF (DDB1- and CUL4-associated factor). Component of a RTT101(MMS1-MMS22) complex with the substrate receptor MMS22. This complex further interacts with RTT107 and CTF4 to form RTT101-MMS1-MMS22-RTT107 and RTT101-MMS1-MMS22-CTF4 complexes respectively. Component of a RTT101(MSS1-CRT10) complex with the substrate receptor CRT10. Component of a RTT101(MSS1-ESC2) complex with the potential substrate receptor ESC2. Component of a RTT101(MSS1-ORC5) complex with the potential substrate receptor ORC5. Interacts (via C-ter) with HRT1; required for ubiquitin-ligase activity. Interacts (via N-ter) with MMS1. Post-translationally, neddylated. HRT1-binding is necessary for RUB1/NEDD8 modification of RTT101. The modification enhances ubiquitin-ligase activity.

The protein localises to the cytoplasm. It localises to the nucleus. It participates in protein modification; protein ubiquitination. In terms of biological role, core component of multiple cullin-RING-based E3 ubiquitin-protein ligase complexes (CRLs), which mediate the ubiquitination of target proteins. As a scaffold protein may contribute to catalysis through positioning of the substrate and the ubiquitin-conjugating enzyme. The CRL associates with CDC34 as the E2 ubiquitin-conjugating enzyme. The functional specificity of the CRL depends on the type of the associated substrate receptor protein. RTT101(MMS1-MMS22) promotes fork progression through damaged DNA or natural pause sites by stabilizing replication proteins like the replication fork-pausing complex (FPC) and leading-strand polymerase at stalled replication forks. RTT101(MMS1-MMS22) ubiquitinates the acetylated histones H3K56ac-H4 at lysine residues H3K121, H3K122 and H3K125. Ubiquitination is required for efficient histone deposition during replication-coupled nucleosome assembly, probably by facilitating the transfer of H3-H4 from ASF1 to other chaperones involved in histone deposition. RTT101(MMS1-CRT10) may regulate nucleotide synthesis through transcriptional regulation of ribonucleotide reductase. RTT101(MMS1) is also involved in the non-functional rRNA decay (NRD) of 25S rRNA through the selective, ubiquitination-dependent degradation of nonfunctional ribosomal particles. Ubiquitinates the FACT (facilitates chromatin transcription) complex subunit SPT16 in an MMS1-independent manner. Involved in regulation of Ty1 transposition and protects the genome from Ty1 integration upstream of tRNA genes. The sequence is that of Cullin-8 (RTT101) from Saccharomyces cerevisiae (strain ATCC 204508 / S288c) (Baker's yeast).